Here is a 128-residue protein sequence, read N- to C-terminus: Diacylglycerol kinase (128 aa).

E34 serves as a coordination point for a divalent metal cation. 2 consecutive transmembrane segments (helical) span residues 35 to 55 (SAFRQIVILALFCIVLASYLT) and 58 to 78 (FLEWGLLILPCFLSVVIELIN). Catalysis depends on E75, which acts as the Proton acceptor. E82 contributes to the a divalent metal cation binding site. Residues 108–128 (LIGLIFWAFIWGRYLLTLYFN) traverse the membrane as a helical segment.

The protein belongs to the bacterial diacylglycerol kinase family. The cofactor is Mg(2+).

The protein resides in the cell inner membrane. It carries out the reaction a 1,2-diacyl-sn-glycerol + ATP = a 1,2-diacyl-sn-glycero-3-phosphate + ADP + H(+). Its function is as follows. Catalyzes the ATP-dependent phosphorylation of sn-l,2-diacylglycerol (DAG) to phosphatidic acid. Involved in the recycling of diacylglycerol produced as a by-product during membrane-derived oligosaccharide (MDO) biosynthesis. In Helicobacter pylori (strain J99 / ATCC 700824) (Campylobacter pylori J99), this protein is Diacylglycerol kinase (dgkA).